A 272-amino-acid chain; its full sequence is Putative phosphoenolpyruvate synthase regulatory protein (272 aa).

152–159 contributes to the ADP binding site; it reads GVSRCGKT.

This sequence belongs to the pyruvate, phosphate/water dikinase regulatory protein family. PSRP subfamily.

The catalysed reaction is [pyruvate, water dikinase] + ADP = [pyruvate, water dikinase]-phosphate + AMP + H(+). The enzyme catalyses [pyruvate, water dikinase]-phosphate + phosphate + H(+) = [pyruvate, water dikinase] + diphosphate. In terms of biological role, bifunctional serine/threonine kinase and phosphorylase involved in the regulation of the phosphoenolpyruvate synthase (PEPS) by catalyzing its phosphorylation/dephosphorylation. The sequence is that of Putative phosphoenolpyruvate synthase regulatory protein from Pseudomonas putida (strain ATCC 47054 / DSM 6125 / CFBP 8728 / NCIMB 11950 / KT2440).